The primary structure comprises 400 residues: Signal recognition particle receptor FtsY (400 aa).

Disordered regions lie at residues 12 to 37 (TKKT…QEEQ) and 51 to 86 (NKIK…KDKK). The span at 51 to 72 (NKIKKTKTSETKKQEKPIETLK) shows a compositional bias: basic and acidic residues. GTP-binding positions include 192 to 199 (GVNGTGKT), 278 to 282 (DTAGR), and 342 to 345 (TKMD).

The protein belongs to the GTP-binding SRP family. FtsY subfamily. Part of the signal recognition particle protein translocation system, which is composed of SRP and FtsY.

It is found in the cell membrane. The protein localises to the cytoplasm. It carries out the reaction GTP + H2O = GDP + phosphate + H(+). Involved in targeting and insertion of nascent membrane proteins into the cytoplasmic membrane. Acts as a receptor for the complex formed by the signal recognition particle (SRP) and the ribosome-nascent chain (RNC). This Mycoplasma mycoides subsp. mycoides SC (strain CCUG 32753 / NCTC 10114 / PG1) protein is Signal recognition particle receptor FtsY.